The sequence spans 111 residues: Universal stress protein B (111 aa).

The next 2 membrane-spanning stretches (helical) occupy residues 1–21 and 90–110; these read MISTVALFWGLCVVCIINMAR and FILTSALCGLVVISLIALLIW.

It belongs to the universal stress protein B family.

It is found in the cell inner membrane. This chain is Universal stress protein B, found in Escherichia fergusonii (strain ATCC 35469 / DSM 13698 / CCUG 18766 / IAM 14443 / JCM 21226 / LMG 7866 / NBRC 102419 / NCTC 12128 / CDC 0568-73).